The primary structure comprises 898 residues: Coatomer subunit gamma (898 aa).

HEAT repeat units follow at residues 62-99 (TEAT…ISQD), 170-207 (EIVK…HDRL), 280-317 (KEIN…TNPT), 319-352 (VIPC…GNES), 353-389 (NVER…KFPK), and 392-427 (KHLI…NIPE). Residues 592–631 (GKSPFSTGASKKGDSVTGTPKSNNASNNNNNNEESSGPES) are disordered. The span at 613 to 626 (SNNASNNNNNNEES) shows a compositional bias: low complexity.

It belongs to the COPG family. As to quaternary structure, oligomeric complex that consists of at least the alpha, beta, beta', gamma, delta, epsilon and zeta subunits.

It is found in the cytoplasm. Its subcellular location is the golgi apparatus membrane. The protein resides in the cytoplasmic vesicle. It localises to the COPI-coated vesicle membrane. In terms of biological role, the coatomer is a cytosolic protein complex that binds to dilysine motifs and reversibly associates with Golgi non-clathrin-coated vesicles, which further mediate biosynthetic protein transport from the ER, via the Golgi up to the trans Golgi network. Coatomer complex is required for budding from Golgi membranes, and is essential for the retrograde Golgi-to-ER transport of dilysine-tagged proteins. The polypeptide is Coatomer subunit gamma (copG) (Dictyostelium discoideum (Social amoeba)).